The primary structure comprises 286 residues: ATP synthase gamma chain (286 aa).

Belongs to the ATPase gamma chain family. As to quaternary structure, F-type ATPases have 2 components, CF(1) - the catalytic core - and CF(0) - the membrane proton channel. CF(1) has five subunits: alpha(3), beta(3), gamma(1), delta(1), epsilon(1). CF(0) has three main subunits: a, b and c.

The protein localises to the cell inner membrane. Functionally, produces ATP from ADP in the presence of a proton gradient across the membrane. The gamma chain is believed to be important in regulating ATPase activity and the flow of protons through the CF(0) complex. In Christiangramia forsetii (strain DSM 17595 / CGMCC 1.15422 / KT0803) (Gramella forsetii), this protein is ATP synthase gamma chain.